A 179-amino-acid chain; its full sequence is Large ribosomal subunit protein uL5 (179 aa).

Belongs to the universal ribosomal protein uL5 family. In terms of assembly, part of the 50S ribosomal subunit; part of the 5S rRNA/L5/L18/L25 subcomplex. Contacts the 5S rRNA and the P site tRNA. Forms a bridge to the 30S subunit in the 70S ribosome.

In terms of biological role, this is one of the proteins that bind and probably mediate the attachment of the 5S RNA into the large ribosomal subunit, where it forms part of the central protuberance. In the 70S ribosome it contacts protein S13 of the 30S subunit (bridge B1b), connecting the 2 subunits; this bridge is implicated in subunit movement. Contacts the P site tRNA; the 5S rRNA and some of its associated proteins might help stabilize positioning of ribosome-bound tRNAs. This chain is Large ribosomal subunit protein uL5, found in Alkaliphilus oremlandii (strain OhILAs) (Clostridium oremlandii (strain OhILAs)).